The chain runs to 212 residues: Peptide methionine sulfoxide reductase MsrA (212 aa).

The active site involves Cys-52.

The protein belongs to the MsrA Met sulfoxide reductase family.

It carries out the reaction L-methionyl-[protein] + [thioredoxin]-disulfide + H2O = L-methionyl-(S)-S-oxide-[protein] + [thioredoxin]-dithiol. The enzyme catalyses [thioredoxin]-disulfide + L-methionine + H2O = L-methionine (S)-S-oxide + [thioredoxin]-dithiol. Functionally, has an important function as a repair enzyme for proteins that have been inactivated by oxidation. Catalyzes the reversible oxidation-reduction of methionine sulfoxide in proteins to methionine. The polypeptide is Peptide methionine sulfoxide reductase MsrA (Escherichia coli O127:H6 (strain E2348/69 / EPEC)).